A 161-amino-acid chain; its full sequence is Lipoprotein signal peptidase (161 aa).

3 helical membrane-spanning segments follow: residues isoleucine 9 to threonine 29, lysine 63 to isoleucine 83, and phenylalanine 88 to isoleucine 108. Active-site residues include aspartate 118 and aspartate 136. Residues isoleucine 131–isoleucine 151 traverse the membrane as a helical segment.

Belongs to the peptidase A8 family.

The protein resides in the cell membrane. The catalysed reaction is Release of signal peptides from bacterial membrane prolipoproteins. Hydrolyzes -Xaa-Yaa-Zaa-|-(S,diacylglyceryl)Cys-, in which Xaa is hydrophobic (preferably Leu), and Yaa (Ala or Ser) and Zaa (Gly or Ala) have small, neutral side chains.. The protein operates within protein modification; lipoprotein biosynthesis (signal peptide cleavage). This protein specifically catalyzes the removal of signal peptides from prolipoproteins. This is Lipoprotein signal peptidase from Staphylococcus epidermidis (strain ATCC 35984 / DSM 28319 / BCRC 17069 / CCUG 31568 / BM 3577 / RP62A).